Reading from the N-terminus, the 164-residue chain is C-phycoerythrin class 1 subunit alpha (164 aa).

The (2R,3E)-phycoerythrobilin site is built by C82 and C139.

This sequence belongs to the phycobiliprotein family. In terms of assembly, heterodimer of an alpha and a beta chain. In terms of processing, contains one covalently linked bilin chromophore.

It is found in the cellular thylakoid membrane. Light-harvesting photosynthetic bile pigment-protein from the phycobiliprotein complex. This is C-phycoerythrin class 1 subunit alpha (cpeA) from Synechococcus sp. (strain WH7803).